An 839-amino-acid polypeptide reads, in one-letter code: Putative AC9 transposase (839 aa).

Polar residues predominate over residues 32-43 (SSSNANGTATDP). Residues 32–85 (SSSNANGTATDPSQDDMAIVHEPQPQPQPQPEPQPQPQPEPEEEAPQKRAKKCT) form a disordered region. Residues 55-70 (QPQPQPQPEPQPQPQP) show a composition bias toward pro residues.

This is Putative AC9 transposase from Zea mays (Maize).